Here is a 390-residue protein sequence, read N- to C-terminus: GTPase Obg (390 aa).

The Obg domain maps to 1–159 (MKFVDEATIL…RDLQLELMLL (159 aa)). A disordered region spans residues 127 to 146 (NTRFKSSVNRTPRQKTMGTP). The span at 129 to 143 (RFKSSVNRTPRQKTM) shows a compositional bias: polar residues. One can recognise an OBG-type G domain in the interval 160-333 (ADVGMLGMPN…LCWDVMHFII (174 aa)). GTP-binding positions include 166–173 (GMPNAGKS), 191–195 (FTTLV), 213–216 (DIPG), 283–286 (NKID), and 314–316 (SAA). Mg(2+) is bound by residues Ser173 and Thr193. A compositionally biased stretch (acidic residues) spans 364-384 (MEAEAEEEWDDDWDEDDDEGV). The disordered stretch occupies residues 364-390 (MEAEAEEEWDDDWDEDDDEGVEIVYQR).

This sequence belongs to the TRAFAC class OBG-HflX-like GTPase superfamily. OBG GTPase family. As to quaternary structure, monomer. Mg(2+) serves as cofactor.

It localises to the cytoplasm. Its function is as follows. An essential GTPase which binds GTP, GDP and possibly (p)ppGpp with moderate affinity, with high nucleotide exchange rates and a fairly low GTP hydrolysis rate. Plays a role in control of the cell cycle, stress response, ribosome biogenesis and in those bacteria that undergo differentiation, in morphogenesis control. This is GTPase Obg from Cronobacter sakazakii (strain ATCC BAA-894) (Enterobacter sakazakii).